The chain runs to 412 residues: 1-deoxy-D-xylulose 5-phosphate reductoisomerase (412 aa).

NADPH contacts are provided by threonine 5, glycine 6, serine 7, isoleucine 8, glycine 31, arginine 32, asparagine 33, and asparagine 125. Lysine 126 is a binding site for 1-deoxy-D-xylulose 5-phosphate. Glutamate 127 contributes to the NADPH binding site. Aspartate 151 lines the Mn(2+) pocket. 4 residues coordinate 1-deoxy-D-xylulose 5-phosphate: serine 152, glutamate 153, serine 189, and histidine 212. Glutamate 153 contacts Mn(2+). Glycine 218 contacts NADPH. 1-deoxy-D-xylulose 5-phosphate is bound by residues serine 225, asparagine 230, lysine 231, and glutamate 234. Residue glutamate 234 participates in Mn(2+) binding.

It belongs to the DXR family. Requires Mg(2+) as cofactor. Mn(2+) is required as a cofactor.

The catalysed reaction is 2-C-methyl-D-erythritol 4-phosphate + NADP(+) = 1-deoxy-D-xylulose 5-phosphate + NADPH + H(+). It participates in isoprenoid biosynthesis; isopentenyl diphosphate biosynthesis via DXP pathway; isopentenyl diphosphate from 1-deoxy-D-xylulose 5-phosphate: step 1/6. Functionally, catalyzes the NADPH-dependent rearrangement and reduction of 1-deoxy-D-xylulose-5-phosphate (DXP) to 2-C-methyl-D-erythritol 4-phosphate (MEP). In Prochlorococcus marinus (strain SARG / CCMP1375 / SS120), this protein is 1-deoxy-D-xylulose 5-phosphate reductoisomerase.